The sequence spans 478 residues: Transposase for insertion sequence element IS231C (478 aa).

Belongs to the transposase 11 family.

Its function is as follows. Involved in the transposition of the insertion sequence. This is Transposase for insertion sequence element IS231C from Bacillus thuringiensis subsp. berliner.